The chain runs to 136 residues: Ribonuclease P protein component (136 aa).

It belongs to the RnpA family. As to quaternary structure, consists of a catalytic RNA component (M1 or rnpB) and a protein subunit.

The enzyme catalyses Endonucleolytic cleavage of RNA, removing 5'-extranucleotides from tRNA precursor.. RNaseP catalyzes the removal of the 5'-leader sequence from pre-tRNA to produce the mature 5'-terminus. It can also cleave other RNA substrates such as 4.5S RNA. The protein component plays an auxiliary but essential role in vivo by binding to the 5'-leader sequence and broadening the substrate specificity of the ribozyme. The polypeptide is Ribonuclease P protein component (Burkholderia pseudomallei (strain 1106a)).